Consider the following 368-residue polypeptide: Peptide chain release factor 2 (368 aa).

At Q250 the chain carries N5-methylglutamine.

This sequence belongs to the prokaryotic/mitochondrial release factor family. Methylated by PrmC. Methylation increases the termination efficiency of RF2.

It is found in the cytoplasm. In terms of biological role, peptide chain release factor 2 directs the termination of translation in response to the peptide chain termination codons UGA and UAA. The polypeptide is Peptide chain release factor 2 (Chlamydia trachomatis serovar L2b (strain UCH-1/proctitis)).